The sequence spans 545 residues: Chaperonin GroEL (545 aa).

ATP contacts are provided by residues threonine 29–proline 32, lysine 50, aspartate 86–threonine 90, glycine 414, asparagine 477–alanine 479, and aspartate 493.

The protein belongs to the chaperonin (HSP60) family. Forms a cylinder of 14 subunits composed of two heptameric rings stacked back-to-back. Interacts with the co-chaperonin GroES.

It localises to the cytoplasm. The enzyme catalyses ATP + H2O + a folded polypeptide = ADP + phosphate + an unfolded polypeptide.. In terms of biological role, together with its co-chaperonin GroES, plays an essential role in assisting protein folding. The GroEL-GroES system forms a nano-cage that allows encapsulation of the non-native substrate proteins and provides a physical environment optimized to promote and accelerate protein folding. The sequence is that of Chaperonin GroEL from Campylobacter fetus subsp. fetus (strain 82-40).